We begin with the raw amino-acid sequence, 125 residues long: Phosphoribosyl-AMP cyclohydrolase (125 aa).

Asp-74 is a Mg(2+) binding site. Zn(2+) is bound at residue Cys-75. The Mg(2+) site is built by Asp-76 and Asp-78. Zn(2+)-binding residues include Cys-92 and Cys-99.

This sequence belongs to the PRA-CH family. As to quaternary structure, homodimer. It depends on Mg(2+) as a cofactor. The cofactor is Zn(2+).

The protein localises to the cytoplasm. It catalyses the reaction 1-(5-phospho-beta-D-ribosyl)-5'-AMP + H2O = 1-(5-phospho-beta-D-ribosyl)-5-[(5-phospho-beta-D-ribosylamino)methylideneamino]imidazole-4-carboxamide. Its pathway is amino-acid biosynthesis; L-histidine biosynthesis; L-histidine from 5-phospho-alpha-D-ribose 1-diphosphate: step 3/9. Its function is as follows. Catalyzes the hydrolysis of the adenine ring of phosphoribosyl-AMP. The protein is Phosphoribosyl-AMP cyclohydrolase of Geobacter sp. (strain M21).